The chain runs to 192 residues: Ion-translocating oxidoreductase complex subunit B (192 aa).

Residues 1–26 (MNTIWIAVGALTFLGLVFGAILGYAS) form a hydrophobic region. Positions 32–91 (EDDPVVEKIDAILPQSQCGQCGYPGCRPYAEAVGLQGEKINRCAPGGEAVMLKIADLLNV) constitute a 4Fe-4S domain. Residues Cys49, Cys52, Cys57, Cys74, Cys117, Cys120, Cys123, Cys127, Cys147, Cys150, Cys153, and Cys157 each contribute to the [4Fe-4S] cluster site. 2 4Fe-4S ferredoxin-type domains span residues 108-137 (MLAVIDENHCIGCTKCIQACPVDAIVGATR) and 138-167 (AMHTVMSDLCTGCNLCVDPCPTHCIELRPV).

It belongs to the 4Fe4S bacterial-type ferredoxin family. RnfB subfamily. The complex is composed of six subunits: RsxA, RsxB, RsxC, RsxD, RsxE and RsxG. It depends on [4Fe-4S] cluster as a cofactor.

Its subcellular location is the cell inner membrane. Part of a membrane-bound complex that couples electron transfer with translocation of ions across the membrane. Required to maintain the reduced state of SoxR. The protein is Ion-translocating oxidoreductase complex subunit B of Salmonella arizonae (strain ATCC BAA-731 / CDC346-86 / RSK2980).